The primary structure comprises 108 residues: Transmembrane protein 265 (108 aa).

Transmembrane regions (helical) follow at residues 34-54 (AATSIICGCSCLGVMALVFAI) and 78-98 (LILASFAVWLAVLILGPLLLW).

Belongs to the CD225/Dispanin family.

Its subcellular location is the membrane. In Homo sapiens (Human), this protein is Transmembrane protein 265.